The primary structure comprises 318 residues: Taste receptor type 2 member 60 (318 aa).

The Extracellular segment spans residues 1–7; that stretch reads MNGDHMV. Residues 8 to 28 form a helical membrane-spanning segment; the sequence is LGSSVTDKKAIILVTILLLLR. Residues 29–40 lie on the Cytoplasmic side of the membrane; the sequence is LVAIAGNGFITA. A helical transmembrane segment spans residues 41–61; sequence ALGVEWVLRRMLLPCDKLLVS. Residues 62–88 are Extracellular-facing; sequence LGASRFCLQSVVMGKTIYVFLHPMAFP. A helical transmembrane segment spans residues 89–109; it reads YNPVLQFLAFQWDFLNAATLW. The Cytoplasmic portion of the chain corresponds to 110 to 128; sequence SSTWLSVFYCVKIATFTHP. A helical membrane pass occupies residues 129-149; the sequence is VFFWLKHKLSGWLPWMLFSSV. Over 150-183 the chain is Extracellular; sequence GLSSFTTILFFIGNHRMYQNYLRNHLQPWNVTGD. An N-linked (GlcNAc...) asparagine glycan is attached at Asn179. Residues 184–204 traverse the membrane as a helical segment; the sequence is SIRSYCEKFYLFPLKMITWTM. Topologically, residues 205–234 are cytoplasmic; sequence PTAVFFICMILLITSLGRHRKKALLTTSGF. Residues 235-255 traverse the membrane as a helical segment; it reads REPSVQAHIKALLALLSFAML. Topologically, residues 256-264 are extracellular; it reads FISYFLSLV. A helical membrane pass occupies residues 265-285; that stretch reads FSAAGIFPPLDFKFWVWESVI. The Cytoplasmic segment spans residues 286 to 318; sequence YLCAAVHPIILLFSNCRLRAVLKSRRSSRCGTP.

The protein belongs to the G-protein coupled receptor T2R family. As to expression, expressed in subsets of taste receptor cells of the tongue and exclusively in gustducin-positive cells.

It localises to the membrane. Its function is as follows. Receptor that may play a role in the perception of bitterness and is gustducin-linked. May play a role in sensing the chemical composition of the gastrointestinal content. The activity of this receptor may stimulate alpha gustducin, mediate PLC-beta-2 activation and lead to the gating of TRPM5. This Homo sapiens (Human) protein is Taste receptor type 2 member 60 (TAS2R60).